Reading from the N-terminus, the 176-residue chain is N5-carboxyaminoimidazole ribonucleotide mutase (176 aa).

Substrate-binding residues include Ser-14, Asp-17, and Arg-44.

The protein belongs to the AIR carboxylase family. Class I subfamily.

It carries out the reaction 5-carboxyamino-1-(5-phospho-D-ribosyl)imidazole + H(+) = 5-amino-1-(5-phospho-D-ribosyl)imidazole-4-carboxylate. It functions in the pathway purine metabolism; IMP biosynthesis via de novo pathway; 5-amino-1-(5-phospho-D-ribosyl)imidazole-4-carboxylate from 5-amino-1-(5-phospho-D-ribosyl)imidazole (N5-CAIR route): step 2/2. Its function is as follows. Catalyzes the conversion of N5-carboxyaminoimidazole ribonucleotide (N5-CAIR) to 4-carboxy-5-aminoimidazole ribonucleotide (CAIR). This chain is N5-carboxyaminoimidazole ribonucleotide mutase, found in Synechocystis sp. (strain ATCC 27184 / PCC 6803 / Kazusa).